Here is a 269-residue protein sequence, read N- to C-terminus: Diaminopimelate epimerase (269 aa).

Asn15 and Asn66 together coordinate substrate. Cys75 serves as the catalytic Proton donor. Substrate-binding positions include 76 to 77 (GN), Asn152, Asn185, and 203 to 204 (ER). Residue Cys212 is the Proton acceptor of the active site. Substrate is bound at residue 213 to 214 (GT).

This sequence belongs to the diaminopimelate epimerase family. As to quaternary structure, homodimer.

It is found in the cytoplasm. It carries out the reaction (2S,6S)-2,6-diaminopimelate = meso-2,6-diaminopimelate. The protein operates within amino-acid biosynthesis; L-lysine biosynthesis via DAP pathway; DL-2,6-diaminopimelate from LL-2,6-diaminopimelate: step 1/1. In terms of biological role, catalyzes the stereoinversion of LL-2,6-diaminopimelate (L,L-DAP) to meso-diaminopimelate (meso-DAP), a precursor of L-lysine and an essential component of the bacterial peptidoglycan. In Parabacteroides distasonis (strain ATCC 8503 / DSM 20701 / CIP 104284 / JCM 5825 / NCTC 11152), this protein is Diaminopimelate epimerase.